A 431-amino-acid chain; its full sequence is Saglin (431 aa).

The N-terminal stretch at M1–G39 is a signal peptide. N95 is a glycosylation site (N-linked (GlcNAc...) asparagine). Residues L120–S169 are a coiled coil.

Homodimer. Female salivary gland (at protein level). Not detected in female carcass without salivary glands, midgut and hemolymph (at protein level). Probably not expressed in male tissues.

It is found in the secreted. Its function is as follows. (Microbial infection) Facilitates efficient midgut colonization by Plasmodium berghei parasites. Promotes successful transmission of Plasmodium berghei at low infection densities. In terms of biological role, (Microbial infection) Facilitates efficient midgut colonization by Plasmodium falciparum. The chain is Saglin from Anopheles coluzzii (African malaria mosquito).